The sequence spans 279 residues: Prephenate dehydratase (279 aa).

Residues 2-178 (KIAYLGPRGS…NSTRFWLLGK (177 aa)) form the Prephenate dehydratase domain. One can recognise an ACT domain in the interval 194 to 272 (LALTLPDNLP…VNVRLLGNYS (79 aa)).

The catalysed reaction is prephenate + H(+) = 3-phenylpyruvate + CO2 + H2O. It functions in the pathway amino-acid biosynthesis; L-phenylalanine biosynthesis; phenylpyruvate from prephenate: step 1/1. The polypeptide is Prephenate dehydratase (pheA) (Lactococcus lactis subsp. cremoris (strain MG1363)).